A 204-amino-acid polypeptide reads, in one-letter code: MIAQIRGKLILKTVSMVIIDNHGIGYEVMIPLSTYYELPDVGSEVSLFVYTFFKQDSILLVGFCTENEKQLFKLMISVSGIGPRLAVNVLSGINSSELIHAIANNDLNRLLKVPGLGRKMAQRVILELRDKVSGWTSKEQITFINNKKDAIDQSVMEEDAISALINLGYKSQAAKDAIDRVISEGGENKSLDVILKKALKVLAM.

Residues 1–64 (MIAQIRGKLI…QDSILLVGFC (64 aa)) are domain I. The tract at residues 65–143 (TENEKQLFKL…GWTSKEQITF (79 aa)) is domain II. The flexible linker stretch occupies residues 144–154 (INNKKDAIDQS). The tract at residues 154 to 204 (SVMEEDAISALINLGYKSQAAKDAIDRVISEGGENKSLDVILKKALKVLAM) is domain III.

It belongs to the RuvA family. In terms of assembly, homotetramer. Forms an RuvA(8)-RuvB(12)-Holliday junction (HJ) complex. HJ DNA is sandwiched between 2 RuvA tetramers; dsDNA enters through RuvA and exits via RuvB. An RuvB hexamer assembles on each DNA strand where it exits the tetramer. Each RuvB hexamer is contacted by two RuvA subunits (via domain III) on 2 adjacent RuvB subunits; this complex drives branch migration. In the full resolvosome a probable DNA-RuvA(4)-RuvB(12)-RuvC(2) complex forms which resolves the HJ.

The protein resides in the cytoplasm. In terms of biological role, the RuvA-RuvB-RuvC complex processes Holliday junction (HJ) DNA during genetic recombination and DNA repair, while the RuvA-RuvB complex plays an important role in the rescue of blocked DNA replication forks via replication fork reversal (RFR). RuvA specifically binds to HJ cruciform DNA, conferring on it an open structure. The RuvB hexamer acts as an ATP-dependent pump, pulling dsDNA into and through the RuvAB complex. HJ branch migration allows RuvC to scan DNA until it finds its consensus sequence, where it cleaves and resolves the cruciform DNA. This is Holliday junction branch migration complex subunit RuvA from Syntrophus aciditrophicus (strain SB).